Consider the following 271-residue polypeptide: uncharacterized protein (271 aa).

Disordered stretches follow at residues Lys50–Leu93 and Lys128–Val233. Composition is skewed to low complexity over residues Ser61–Leu93 and Asn129–Asn165. Over residues Thr169–Asn179 the composition is skewed to basic and acidic residues. Composition is skewed to acidic residues over residues Glu180–Glu199 and Met207–Glu217.

This is an uncharacterized protein from Dictyostelium discoideum (Social amoeba).